A 566-amino-acid chain; its full sequence is CTP synthase (566 aa).

Positions 1–282 (MSIKRAQLGG…DAYIIDQLGL (282 aa)) are amidoligase domain. Residue Ser23 participates in CTP binding. Ser23 is a binding site for UTP. ATP is bound by residues 24–29 (SLGKGL) and Asp81. Mg(2+)-binding residues include Asp81 and Glu156. CTP contacts are provided by residues 163–165 (DIE), 203–208 (KTKPTQ), and Lys239. UTP is bound by residues 203–208 (KTKPTQ) and Lys239. Positions 308–556 (TIGLVGKYID…IGAALDRQKA (249 aa)) constitute a Glutamine amidotransferase type-1 domain. Gly371 is a binding site for L-glutamine. Cys398 acts as the Nucleophile; for glutamine hydrolysis in catalysis. L-glutamine contacts are provided by residues 399-402 (LGLQ), Glu422, and Arg482. Residues His529 and Glu531 contribute to the active site.

It belongs to the CTP synthase family. In terms of assembly, homotetramer.

The enzyme catalyses UTP + L-glutamine + ATP + H2O = CTP + L-glutamate + ADP + phosphate + 2 H(+). It carries out the reaction L-glutamine + H2O = L-glutamate + NH4(+). It catalyses the reaction UTP + NH4(+) + ATP = CTP + ADP + phosphate + 2 H(+). Its pathway is pyrimidine metabolism; CTP biosynthesis via de novo pathway; CTP from UDP: step 2/2. Its activity is regulated as follows. Allosterically activated by GTP, when glutamine is the substrate; GTP has no effect on the reaction when ammonia is the substrate. The allosteric effector GTP functions by stabilizing the protein conformation that binds the tetrahedral intermediate(s) formed during glutamine hydrolysis. Inhibited by the product CTP, via allosteric rather than competitive inhibition. Catalyzes the ATP-dependent amination of UTP to CTP with either L-glutamine or ammonia as the source of nitrogen. Regulates intracellular CTP levels through interactions with the four ribonucleotide triphosphates. This chain is CTP synthase, found in Leifsonia xyli subsp. xyli (strain CTCB07).